Reading from the N-terminus, the 320-residue chain is Elongation factor Ts (320 aa).

Positions 82–85 are involved in Mg(2+) ion dislocation from EF-Tu; it reads TDFV.

The protein belongs to the EF-Ts family.

It localises to the cytoplasm. Functionally, associates with the EF-Tu.GDP complex and induces the exchange of GDP to GTP. It remains bound to the aminoacyl-tRNA.EF-Tu.GTP complex up to the GTP hydrolysis stage on the ribosome. This Flavobacterium johnsoniae (strain ATCC 17061 / DSM 2064 / JCM 8514 / BCRC 14874 / CCUG 350202 / NBRC 14942 / NCIMB 11054 / UW101) (Cytophaga johnsonae) protein is Elongation factor Ts.